The following is a 337-amino-acid chain: DNA-directed RNA polymerase subunit alpha (337 aa).

Residues 1–231 (MRNITTSAYT…KQLSVFDKIT (231 aa)) form an alpha N-terminal domain (alpha-NTD) region. Positions 247 to 337 (ENTKLLQNIT…IAELKAQNEG (91 aa)) are alpha C-terminal domain (alpha-CTD).

The protein belongs to the RNA polymerase alpha chain family. Homodimer. The RNAP catalytic core consists of 2 alpha, 1 beta, 1 beta' and 1 omega subunit. When a sigma factor is associated with the core the holoenzyme is formed, which can initiate transcription.

It catalyses the reaction RNA(n) + a ribonucleoside 5'-triphosphate = RNA(n+1) + diphosphate. Functionally, DNA-dependent RNA polymerase catalyzes the transcription of DNA into RNA using the four ribonucleoside triphosphates as substrates. The chain is DNA-directed RNA polymerase subunit alpha from Campylobacter jejuni subsp. jejuni serotype O:2 (strain ATCC 700819 / NCTC 11168).